Consider the following 192-residue polypeptide: MISISDTAQAHFRKLLKKQPDGTNIRVFVVNPGTQNAECGVSYCPPDAVDPEDQHLPFSGFDCLVDPLSAPYLVDATIDFVTDQMGSQLTLKAPNAKMRKVADDAPLIDRIEYVLMSEVNPMLAGHGGKVTLVELTEDKLAILQFGGGCNGCSMVDYTLKEGIEKQLLEKFPGELNGVKDATEHQRGDHSYY.

Residues C149 and C152 each contribute to the [4Fe-4S] cluster site.

It belongs to the NfuA family. Homodimer. [4Fe-4S] cluster serves as cofactor.

Functionally, involved in iron-sulfur cluster biogenesis. Binds a 4Fe-4S cluster, can transfer this cluster to apoproteins, and thereby intervenes in the maturation of Fe/S proteins. Could also act as a scaffold/chaperone for damaged Fe/S proteins. The chain is Fe/S biogenesis protein NfuA from Aeromonas salmonicida (strain A449).